Here is a 494-residue protein sequence, read N- to C-terminus: Ketol-acid reductoisomerase (NADP(+)) (494 aa).

The KARI N-terminal Rossmann domain occupies 14–208; sequence LDQLGRCRFM…GGHRAGCLES (195 aa). Residues 45-48, R68, R76, S78, and 108-110 each bind NADP(+); these read CGAQ and DKQ. Residue H132 is part of the active site. G158 serves as a coordination point for NADP(+). 2 KARI C-terminal knotted domains span residues 209 to 344 and 345 to 487; these read SFVA…NYPD and SSLE…MTDM. Mg(2+)-binding residues include D217, E221, E389, and E393. Residue S414 participates in substrate binding.

It belongs to the ketol-acid reductoisomerase family. Requires Mg(2+) as cofactor.

The catalysed reaction is (2R)-2,3-dihydroxy-3-methylbutanoate + NADP(+) = (2S)-2-acetolactate + NADPH + H(+). It carries out the reaction (2R,3R)-2,3-dihydroxy-3-methylpentanoate + NADP(+) = (S)-2-ethyl-2-hydroxy-3-oxobutanoate + NADPH + H(+). It participates in amino-acid biosynthesis; L-isoleucine biosynthesis; L-isoleucine from 2-oxobutanoate: step 2/4. It functions in the pathway amino-acid biosynthesis; L-valine biosynthesis; L-valine from pyruvate: step 2/4. Involved in the biosynthesis of branched-chain amino acids (BCAA). Catalyzes an alkyl-migration followed by a ketol-acid reduction of (S)-2-acetolactate (S2AL) to yield (R)-2,3-dihydroxy-isovalerate. In the isomerase reaction, S2AL is rearranged via a Mg-dependent methyl migration to produce 3-hydroxy-3-methyl-2-ketobutyrate (HMKB). In the reductase reaction, this 2-ketoacid undergoes a metal-dependent reduction by NADPH to yield (R)-2,3-dihydroxy-isovalerate. The polypeptide is Ketol-acid reductoisomerase (NADP(+)) (Aliivibrio salmonicida (strain LFI1238) (Vibrio salmonicida (strain LFI1238))).